Here is a 333-residue protein sequence, read N- to C-terminus: Glycerol-3-phosphate dehydrogenase [NAD(P)+] (333 aa).

Positions 13, 33, and 108 each coordinate NADPH. 2 residues coordinate sn-glycerol 3-phosphate: lysine 108 and glycine 138. NADPH is bound at residue serine 142. 5 residues coordinate sn-glycerol 3-phosphate: lysine 193, aspartate 246, serine 256, arginine 257, and asparagine 258. The active-site Proton acceptor is the lysine 193. Arginine 257 is an NADPH binding site. Residues valine 281 and glutamate 283 each contribute to the NADPH site.

It belongs to the NAD-dependent glycerol-3-phosphate dehydrogenase family.

It localises to the cytoplasm. It catalyses the reaction sn-glycerol 3-phosphate + NAD(+) = dihydroxyacetone phosphate + NADH + H(+). It carries out the reaction sn-glycerol 3-phosphate + NADP(+) = dihydroxyacetone phosphate + NADPH + H(+). The protein operates within membrane lipid metabolism; glycerophospholipid metabolism. Functionally, catalyzes the reduction of the glycolytic intermediate dihydroxyacetone phosphate (DHAP) to sn-glycerol 3-phosphate (G3P), the key precursor for phospholipid synthesis. The sequence is that of Glycerol-3-phosphate dehydrogenase [NAD(P)+] from Bifidobacterium longum (strain DJO10A).